Here is a 1939-residue protein sequence, read N- to C-terminus: Myosin heavy chain, skeletal muscle, adult (1939 aa).

At A2 the chain carries N-acetylalanine. The region spanning 34-83 (DAKSSVFVVHPKESFVKGTIQSKEGGKVTVKTEGGETLTVKEDQVFSMNP) is the Myosin N-terminal SH3-like domain. Residue K36 is modified to N6-methyllysine. The Myosin motor domain occupies 87–781 (DKIEDMAMMT…LLGLLEEMRD (695 aa)). Position 131 is an N6,N6,N6-trimethyllysine (K131). 180–187 (GESGAGKT) lines the ATP pocket. K552 carries the post-translational modification N6,N6,N6-trimethyllysine. Positions 658–680 (LNKLMANLRSTHPHFVRCIIPNE) are actin-binding. A Pros-methylhistidine modification is found at H756. An actin-binding region spans residues 760 to 774 (RFGHTKVFFKAGLLG). The IQ domain maps to 784 to 813 (LAEIITRTQARCRGFLMRVEYRRMVERRES). The interval 839–841 (IKP) is hinge. Residues 842 to 1939 (LLKSAESEKE…IHGKKIEEEE (1098 aa)) are a coiled coil.

It belongs to the TRAFAC class myosin-kinesin ATPase superfamily. Myosin family. In terms of assembly, muscle myosin is a hexameric protein that consists of 2 heavy chain subunits (MHC), 2 alkali light chain subunits (MLC) and 2 regulatory light chain subunits (MLC-2).

The protein localises to the cytoplasm. Its subcellular location is the myofibril. Its function is as follows. Muscle contraction. Myosin is a protein that binds to F-actin and has ATPase activity that is activated by F-actin. The polypeptide is Myosin heavy chain, skeletal muscle, adult (Gallus gallus (Chicken)).